The primary structure comprises 615 residues: 1-deoxy-D-xylulose-5-phosphate synthase (615 aa).

Residues histidine 72 and 113–115 (GHA) contribute to the thiamine diphosphate site. Position 144 (aspartate 144) interacts with Mg(2+). Residues 145–146 (GA), asparagine 173, tyrosine 281, and glutamate 360 each bind thiamine diphosphate. Mg(2+) is bound at residue asparagine 173.

Belongs to the transketolase family. DXPS subfamily. Homodimer. It depends on Mg(2+) as a cofactor. The cofactor is thiamine diphosphate.

It catalyses the reaction D-glyceraldehyde 3-phosphate + pyruvate + H(+) = 1-deoxy-D-xylulose 5-phosphate + CO2. Its pathway is metabolic intermediate biosynthesis; 1-deoxy-D-xylulose 5-phosphate biosynthesis; 1-deoxy-D-xylulose 5-phosphate from D-glyceraldehyde 3-phosphate and pyruvate: step 1/1. Functionally, catalyzes the acyloin condensation reaction between C atoms 2 and 3 of pyruvate and glyceraldehyde 3-phosphate to yield 1-deoxy-D-xylulose-5-phosphate (DXP). The sequence is that of 1-deoxy-D-xylulose-5-phosphate synthase from Thermus thermophilus (strain ATCC BAA-163 / DSM 7039 / HB27).